We begin with the raw amino-acid sequence, 610 residues long: Glucoamylase ARB_02327-1 (610 aa).

A signal peptide spans 1–18 (MRVTSLLWSSLVIPAAVG). A propeptide spanning residues 19-24 (FQVRFK) is cleaved from the precursor. N49 is a glycosylation site (N-linked (GlcNAc...) asparagine). Position 143 (W143) interacts with substrate. A glycan (N-linked (GlcNAc...) asparagine) is linked at N194. Residue D199 is the Proton acceptor of the active site. E202 serves as the catalytic Proton donor. 3 disulfide bridges follow: C233–C236, C245–C472, and C285–C293. Residues 504 to 610 (TALPTKNNVR…SGAIKRDTWR (107 aa)) form the CBM20 domain.

Belongs to the glycosyl hydrolase 15 family.

It localises to the secreted. The catalysed reaction is Hydrolysis of terminal (1-&gt;4)-linked alpha-D-glucose residues successively from non-reducing ends of the chains with release of beta-D-glucose.. The sequence is that of Glucoamylase ARB_02327-1 from Arthroderma benhamiae (strain ATCC MYA-4681 / CBS 112371) (Trichophyton mentagrophytes).